We begin with the raw amino-acid sequence, 430 residues long: Enolase (430 aa).

Gln-167 contacts (2R)-2-phosphoglycerate. Glu-209 serves as the catalytic Proton donor. Mg(2+)-binding residues include Asp-245, Glu-286, and Asp-313. Lys-338, Arg-367, Ser-368, and Lys-389 together coordinate (2R)-2-phosphoglycerate. Lys-338 functions as the Proton acceptor in the catalytic mechanism.

Belongs to the enolase family. It depends on Mg(2+) as a cofactor.

Its subcellular location is the cytoplasm. The protein resides in the secreted. The protein localises to the cell surface. It carries out the reaction (2R)-2-phosphoglycerate = phosphoenolpyruvate + H2O. It functions in the pathway carbohydrate degradation; glycolysis; pyruvate from D-glyceraldehyde 3-phosphate: step 4/5. In terms of biological role, catalyzes the reversible conversion of 2-phosphoglycerate (2-PG) into phosphoenolpyruvate (PEP). It is essential for the degradation of carbohydrates via glycolysis. The sequence is that of Enolase from Synechococcus sp. (strain WH7803).